The primary structure comprises 353 residues: tRNA-specific 2-thiouridylase MnmA 2 (353 aa).

6–13 (LLSGGVDS) lines the ATP pocket. Residues 92–94 (NPD) form an interaction with target base in tRNA region. The active-site Nucleophile is the C97. A disulfide bond links C97 and C192. Position 120 (G120) interacts with ATP. The tract at residues 142-144 (KDQ) is interaction with tRNA. The active-site Cysteine persulfide intermediate is C192.

It belongs to the MnmA/TRMU family.

Its subcellular location is the cytoplasm. It carries out the reaction S-sulfanyl-L-cysteinyl-[protein] + uridine(34) in tRNA + AH2 + ATP = 2-thiouridine(34) in tRNA + L-cysteinyl-[protein] + A + AMP + diphosphate + H(+). In terms of biological role, catalyzes the 2-thiolation of uridine at the wobble position (U34) of tRNA, leading to the formation of s(2)U34. The sequence is that of tRNA-specific 2-thiouridylase MnmA 2 from Bacteroides fragilis (strain ATCC 25285 / DSM 2151 / CCUG 4856 / JCM 11019 / LMG 10263 / NCTC 9343 / Onslow / VPI 2553 / EN-2).